A 298-amino-acid polypeptide reads, in one-letter code: Homoserine kinase (298 aa).

Residue 79-89 (PIARGLGSSGA) participates in ATP binding.

The protein belongs to the GHMP kinase family. Homoserine kinase subfamily.

It is found in the cytoplasm. It carries out the reaction L-homoserine + ATP = O-phospho-L-homoserine + ADP + H(+). The protein operates within amino-acid biosynthesis; L-threonine biosynthesis; L-threonine from L-aspartate: step 4/5. In terms of biological role, catalyzes the ATP-dependent phosphorylation of L-homoserine to L-homoserine phosphate. This chain is Homoserine kinase, found in Pyrobaculum islandicum (strain DSM 4184 / JCM 9189 / GEO3).